The following is a 130-amino-acid chain: Small ribosomal subunit protein uS9 (130 aa).

This sequence belongs to the universal ribosomal protein uS9 family.

This Methylococcus capsulatus (strain ATCC 33009 / NCIMB 11132 / Bath) protein is Small ribosomal subunit protein uS9.